The sequence spans 491 residues: Protein nucleotidyltransferase YdiU (491 aa).

G94, G96, R97, K117, D129, G130, R180, and R187 together coordinate ATP. The Proton acceptor role is filled by D256. Mg(2+) contacts are provided by N257 and D266. ATP is bound at residue D266.

This sequence belongs to the SELO family. Mg(2+) is required as a cofactor. It depends on Mn(2+) as a cofactor.

The enzyme catalyses L-seryl-[protein] + ATP = 3-O-(5'-adenylyl)-L-seryl-[protein] + diphosphate. The catalysed reaction is L-threonyl-[protein] + ATP = 3-O-(5'-adenylyl)-L-threonyl-[protein] + diphosphate. It carries out the reaction L-tyrosyl-[protein] + ATP = O-(5'-adenylyl)-L-tyrosyl-[protein] + diphosphate. It catalyses the reaction L-histidyl-[protein] + UTP = N(tele)-(5'-uridylyl)-L-histidyl-[protein] + diphosphate. The enzyme catalyses L-seryl-[protein] + UTP = O-(5'-uridylyl)-L-seryl-[protein] + diphosphate. The catalysed reaction is L-tyrosyl-[protein] + UTP = O-(5'-uridylyl)-L-tyrosyl-[protein] + diphosphate. In terms of biological role, nucleotidyltransferase involved in the post-translational modification of proteins. It can catalyze the addition of adenosine monophosphate (AMP) or uridine monophosphate (UMP) to a protein, resulting in modifications known as AMPylation and UMPylation. The sequence is that of Protein nucleotidyltransferase YdiU from Bacillus cytotoxicus (strain DSM 22905 / CIP 110041 / 391-98 / NVH 391-98).